Here is a 322-residue protein sequence, read N- to C-terminus: Uridylate-specific endoribonuclease EndoU (322 aa).

The helical transmembrane segment at Phe25 to Phe45 threads the bilayer. The 270-residue stretch at Thr53–Ser322 folds into the EndoU domain. Catalysis depends on residues His200, His215, and Lys259.

This sequence belongs to the ENDOU family. In terms of assembly, monomer. Requires Mn(2+) as cofactor. As to expression, predominantly expressed in head.

It is found in the membrane. It carries out the reaction a ribonucleotidyl-ribonucleotide-RNA = a 3'-end 2',3'-cyclophospho-ribonucleotide-RNA + a 5'-end dephospho-ribonucleoside-RNA. Functionally, endoribonuclease that cleaves single-stranded RNAs at uridylates and releases products that have 2'-3'-cyclic phosphate termini. Preferentially cleaves single stranded RNA at poly-U sites with CU, UC and AU sites cleaved less efficiently. May target mRNAs encoding proteins involved in lipid metabolism to regulate their expression. Regulates levels of TBPH protein, but not mRNA, by an as yet unknown mechanism. Important for neuronal development or function. This Drosophila melanogaster (Fruit fly) protein is Uridylate-specific endoribonuclease EndoU.